The chain runs to 186 residues: GTP cyclohydrolase 1 (186 aa).

Positions 78, 81, and 150 each coordinate Zn(2+).

Belongs to the GTP cyclohydrolase I family. In terms of assembly, toroid-shaped homodecamer, composed of two pentamers of five dimers.

It carries out the reaction GTP + H2O = 7,8-dihydroneopterin 3'-triphosphate + formate + H(+). Its pathway is cofactor biosynthesis; 7,8-dihydroneopterin triphosphate biosynthesis; 7,8-dihydroneopterin triphosphate from GTP: step 1/1. The sequence is that of GTP cyclohydrolase 1 from Enterococcus faecalis (strain ATCC 700802 / V583).